The sequence spans 56 residues: Large ribosomal subunit protein eL40 (56 aa).

The protein belongs to the eukaryotic ribosomal protein eL40 family.

This chain is Large ribosomal subunit protein eL40, found in Saccharolobus islandicus (strain Y.N.15.51 / Yellowstone #2) (Sulfolobus islandicus).